A 323-amino-acid polypeptide reads, in one-letter code: Aspartate carbamoyltransferase catalytic subunit (323 aa).

Carbamoyl phosphate is bound by residues R55 and T56. K83 is an L-aspartate binding site. Positions 105, 133, and 136 each coordinate carbamoyl phosphate. The L-aspartate site is built by R166 and R220. Residues G261 and P262 each coordinate carbamoyl phosphate.

It belongs to the aspartate/ornithine carbamoyltransferase superfamily. ATCase family. In terms of assembly, heterododecamer (2C3:3R2) of six catalytic PyrB chains organized as two trimers (C3), and six regulatory PyrI chains organized as three dimers (R2).

It carries out the reaction carbamoyl phosphate + L-aspartate = N-carbamoyl-L-aspartate + phosphate + H(+). The protein operates within pyrimidine metabolism; UMP biosynthesis via de novo pathway; (S)-dihydroorotate from bicarbonate: step 2/3. In terms of biological role, catalyzes the condensation of carbamoyl phosphate and aspartate to form carbamoyl aspartate and inorganic phosphate, the committed step in the de novo pyrimidine nucleotide biosynthesis pathway. In Acidothermus cellulolyticus (strain ATCC 43068 / DSM 8971 / 11B), this protein is Aspartate carbamoyltransferase catalytic subunit.